The sequence spans 351 residues: Thiamine-phosphate synthase (351 aa).

The tract at residues 1–128 (MKNPNIIQPE…SKIASEIRYE (128 aa)) is unknown. The thiamine-phosphate synthase stretch occupies residues 129-351 (IYTLEIEILN…IIIKELSHEN (223 aa)). 4-amino-2-methyl-5-(diphosphooxymethyl)pyrimidine is bound by residues 180-184 (QHRFK) and Asn212. Residues Asn213 and Asp232 each contribute to the Mg(2+) site. Ser251 contributes to the 4-amino-2-methyl-5-(diphosphooxymethyl)pyrimidine binding site. 277-279 (TLT) is a 2-[(2R,5Z)-2-carboxy-4-methylthiazol-5(2H)-ylidene]ethyl phosphate binding site. Lys280 is a binding site for 4-amino-2-methyl-5-(diphosphooxymethyl)pyrimidine. 2-[(2R,5Z)-2-carboxy-4-methylthiazol-5(2H)-ylidene]ethyl phosphate contacts are provided by residues Gly307 and 327 to 328 (VS).

Belongs to the thiamine-phosphate synthase family.

The catalysed reaction is 2-[(2R,5Z)-2-carboxy-4-methylthiazol-5(2H)-ylidene]ethyl phosphate + 4-amino-2-methyl-5-(diphosphooxymethyl)pyrimidine + 2 H(+) = thiamine phosphate + CO2 + diphosphate. The enzyme catalyses 2-(2-carboxy-4-methylthiazol-5-yl)ethyl phosphate + 4-amino-2-methyl-5-(diphosphooxymethyl)pyrimidine + 2 H(+) = thiamine phosphate + CO2 + diphosphate. It catalyses the reaction 4-methyl-5-(2-phosphooxyethyl)-thiazole + 4-amino-2-methyl-5-(diphosphooxymethyl)pyrimidine + H(+) = thiamine phosphate + diphosphate. Its pathway is cofactor biosynthesis; thiamine diphosphate biosynthesis; thiamine phosphate from 4-amino-2-methyl-5-diphosphomethylpyrimidine and 4-methyl-5-(2-phosphoethyl)-thiazole: step 1/1. Condenses 4-methyl-5-(beta-hydroxyethyl)thiazole monophosphate (THZ-P) and 2-methyl-4-amino-5-hydroxymethyl pyrimidine pyrophosphate (HMP-PP) to form thiamine monophosphate (TMP). The sequence is that of Thiamine-phosphate synthase from Prochlorococcus marinus subsp. pastoris (strain CCMP1986 / NIES-2087 / MED4).